The primary structure comprises 361 residues: MSKRAFNFCAGPAALPDAVLQRAQAEMLDWRGKGLSVMEMSHRSDDYVAIAEKAEQDLRDLLSVPSNYKVLFLQGGASQQFAEIPLNLLPENGVADYVETGIWSKKAIEEARRFGSVNVAASAKAYDYLAIPGQNEWKLSKNAAYLHYASNETIGGLQFDWVPEAGDVPLVVDMSSDILSRPIDVSQYGLIYAGAQKNIGPSGLVVVIVREDLLGRARSSCPTMLDYKVSADNGSMYNTPATYSWYLSGLVFEWLKEQGGVEAMEQRNRAKKDRLYGFIDSSEFYTNPISHNARSWMNVPFRLADERLDKAFLAGADARGLLNLKGHRSVGGMRASIYNALGLEAVEALVGYMAEFEKEHA.

Arginine 43 provides a ligand contact to L-glutamate. Residues 77–78 (AS), tryptophan 103, threonine 153, aspartate 173, and glutamine 196 contribute to the pyridoxal 5'-phosphate site. Lysine 197 carries the post-translational modification N6-(pyridoxal phosphate)lysine. 238-239 (NT) is a binding site for pyridoxal 5'-phosphate.

Belongs to the class-V pyridoxal-phosphate-dependent aminotransferase family. SerC subfamily. In terms of assembly, homodimer. Pyridoxal 5'-phosphate serves as cofactor.

It is found in the cytoplasm. It catalyses the reaction O-phospho-L-serine + 2-oxoglutarate = 3-phosphooxypyruvate + L-glutamate. The enzyme catalyses 4-(phosphooxy)-L-threonine + 2-oxoglutarate = (R)-3-hydroxy-2-oxo-4-phosphooxybutanoate + L-glutamate. Its pathway is amino-acid biosynthesis; L-serine biosynthesis; L-serine from 3-phospho-D-glycerate: step 2/3. It functions in the pathway cofactor biosynthesis; pyridoxine 5'-phosphate biosynthesis; pyridoxine 5'-phosphate from D-erythrose 4-phosphate: step 3/5. Its function is as follows. Catalyzes the reversible conversion of 3-phosphohydroxypyruvate to phosphoserine and of 3-hydroxy-2-oxo-4-phosphonooxybutanoate to phosphohydroxythreonine. The protein is Phosphoserine aminotransferase of Pseudomonas entomophila (strain L48).